Reading from the N-terminus, the 198-residue chain is FMN-dependent NADH:quinone oxidoreductase (198 aa).

FMN-binding positions include serine 10 and 16-18 (SIS).

This sequence belongs to the azoreductase type 1 family. In terms of assembly, homodimer. It depends on FMN as a cofactor.

The catalysed reaction is 2 a quinone + NADH + H(+) = 2 a 1,4-benzosemiquinone + NAD(+). The enzyme catalyses N,N-dimethyl-1,4-phenylenediamine + anthranilate + 2 NAD(+) = 2-(4-dimethylaminophenyl)diazenylbenzoate + 2 NADH + 2 H(+). Quinone reductase that provides resistance to thiol-specific stress caused by electrophilic quinones. Its function is as follows. Also exhibits azoreductase activity. Catalyzes the reductive cleavage of the azo bond in aromatic azo compounds to the corresponding amines. This is FMN-dependent NADH:quinone oxidoreductase from Mycoplasmopsis pulmonis (strain UAB CTIP) (Mycoplasma pulmonis).